Reading from the N-terminus, the 152-residue chain is Cytochrome c oxidase subunit 5A, mitochondrial (152 aa).

The N-terminal 43 residues, 1-43 (MLGTALRRCAVAAAAASRAGPRGLLHPAPAPGPAAAIQSIRCY), are a transit peptide targeting the mitochondrion. The SIFI-degron motif lies at 2–22 (LGTALRRCAVAAAAASRAGPR). N6-acetyllysine is present on residues Lys-89 and Lys-115. Thr-143 is modified (phosphothreonine).

This sequence belongs to the cytochrome c oxidase subunit 5A family. As to quaternary structure, component of the cytochrome c oxidase (complex IV, CIV), a multisubunit enzyme composed of 14 subunits. The complex is composed of a catalytic core of 3 subunits MT-CO1, MT-CO2 and MT-CO3, encoded in the mitochondrial DNA, and 11 supernumerary subunits COX4I, COX5A, COX5B, COX6A, COX6B, COX6C, COX7A, COX7B, COX7C, COX8 and NDUFA4, which are encoded in the nuclear genome. The complex exists as a monomer or a dimer and forms supercomplexes (SCs) in the inner mitochondrial membrane with NADH-ubiquinone oxidoreductase (complex I, CI) and ubiquinol-cytochrome c oxidoreductase (cytochrome b-c1 complex, complex III, CIII), resulting in different assemblies (supercomplex SCI(1)III(2)IV(1) and megacomplex MCI(2)III(2)IV(2)). Interacts with AFG1L. Interacts with RAB5IF. In terms of processing, in response to mitochondrial stress, the precursor protein is ubiquitinated by the SIFI complex in the cytoplasm before mitochondrial import, leading to its degradation. Within the SIFI complex, UBR4 initiates ubiquitin chain that are further elongated or branched by KCMF1.

It localises to the mitochondrion inner membrane. The protein operates within energy metabolism; oxidative phosphorylation. In terms of biological role, component of the cytochrome c oxidase, the last enzyme in the mitochondrial electron transport chain which drives oxidative phosphorylation. The respiratory chain contains 3 multisubunit complexes succinate dehydrogenase (complex II, CII), ubiquinol-cytochrome c oxidoreductase (cytochrome b-c1 complex, complex III, CIII) and cytochrome c oxidase (complex IV, CIV), that cooperate to transfer electrons derived from NADH and succinate to molecular oxygen, creating an electrochemical gradient over the inner membrane that drives transmembrane transport and the ATP synthase. Cytochrome c oxidase is the component of the respiratory chain that catalyzes the reduction of oxygen to water. Electrons originating from reduced cytochrome c in the intermembrane space (IMS) are transferred via the dinuclear copper A center (CU(A)) of subunit 2 and heme A of subunit 1 to the active site in subunit 1, a binuclear center (BNC) formed by heme A3 and copper B (CU(B)). The BNC reduces molecular oxygen to 2 water molecules using 4 electrons from cytochrome c in the IMS and 4 protons from the mitochondrial matrix. In Eulemur fulvus fulvus (Brown lemur), this protein is Cytochrome c oxidase subunit 5A, mitochondrial (COX5A).